The following is a 658-amino-acid chain: UvrABC system protein B (658 aa).

The Helicase ATP-binding domain maps to 26 to 413; sequence EGINSGKKKQ…SPEVIEQIIR (388 aa). 39–46 is an ATP binding site; the sequence is GATGTGKT. Residues 92-115 carry the Beta-hairpin motif; it reads YYDYYQPEAYVPQTDTFIEKDAQI. Residues 430–596 form the Helicase C-terminal domain; sequence QIDDLLGEIQ…TIQKGVRDVI (167 aa). The 36-residue stretch at 622–657 folds into the UVR domain; that stretch reads EKTIAKMEAEMKEAAKALDFERAAELRDLLLELKAE.

Belongs to the UvrB family. In terms of assembly, forms a heterotetramer with UvrA during the search for lesions. Interacts with UvrC in an incision complex.

It is found in the cytoplasm. The UvrABC repair system catalyzes the recognition and processing of DNA lesions. A damage recognition complex composed of 2 UvrA and 2 UvrB subunits scans DNA for abnormalities. Upon binding of the UvrA(2)B(2) complex to a putative damaged site, the DNA wraps around one UvrB monomer. DNA wrap is dependent on ATP binding by UvrB and probably causes local melting of the DNA helix, facilitating insertion of UvrB beta-hairpin between the DNA strands. Then UvrB probes one DNA strand for the presence of a lesion. If a lesion is found the UvrA subunits dissociate and the UvrB-DNA preincision complex is formed. This complex is subsequently bound by UvrC and the second UvrB is released. If no lesion is found, the DNA wraps around the other UvrB subunit that will check the other stand for damage. In Bacillus cereus (strain ZK / E33L), this protein is UvrABC system protein B.